We begin with the raw amino-acid sequence, 1128 residues long: Nck-associated protein 1 (1128 aa).

Residues 640–665 (AVNKKSKKQTGKKGEPEREKPGVESM) are disordered. A compositionally biased stretch (basic and acidic residues) spans 651-665 (KKGEPEREKPGVESM). The chain crosses the membrane as a helical span at residues 995 to 1015 (IACLLMVFVAVSLPTLASNVM).

It belongs to the HEM-1/HEM-2 family.

Its subcellular location is the cell membrane. It is found in the cell projection. The protein localises to the lamellipodium membrane. Its function is as follows. Part of the WAVE complex that regulates lamellipodia formation. The WAVE complex regulates actin filament reorganization via its interaction with the Arp2/3 complex. Actin remodeling activity is regulated by RAC1. Plays a role in neural tube closure. The protein is Nck-associated protein 1 (nckap1) of Xenopus laevis (African clawed frog).